Here is a 369-residue protein sequence, read N- to C-terminus: Glutamate 5-kinase (369 aa).

Lys9 contacts ATP. Substrate contacts are provided by Ser49, Asp136, and Asn148. ATP-binding positions include 168–169 (TD) and 210–216 (TGGMLTK). The PUA domain occupies 275–355 (QGEIYVDQGA…KGVVIHRDDW (81 aa)).

It belongs to the glutamate 5-kinase family.

It is found in the cytoplasm. The catalysed reaction is L-glutamate + ATP = L-glutamyl 5-phosphate + ADP. The protein operates within amino-acid biosynthesis; L-proline biosynthesis; L-glutamate 5-semialdehyde from L-glutamate: step 1/2. Catalyzes the transfer of a phosphate group to glutamate to form L-glutamate 5-phosphate. This Streptococcus sanguinis (strain SK36) protein is Glutamate 5-kinase.